Reading from the N-terminus, the 64-residue chain is Prokaryotic ubiquitin-like protein Pup (64 aa).

Residues 20-58 are ARC ATPase binding; the sequence is QELTLAASHVVSDVSEVDDLLDEIDGLLAENAEDFVTGF. Glutamate 64 participates in a covalent cross-link: Isoglutamyl lysine isopeptide (Glu-Lys) (interchain with K-? in acceptor proteins).

It belongs to the prokaryotic ubiquitin-like protein family. In terms of assembly, strongly interacts with the proteasome-associated ATPase ARC through a hydrophobic interface; the interacting region of Pup lies in its C-terminal half. There is one Pup binding site per ARC hexamer ring.

The protein operates within protein degradation; proteasomal Pup-dependent pathway. Its function is as follows. Protein modifier that is covalently attached to lysine residues of substrate proteins, thereby targeting them for proteasomal degradation. The tagging system is termed pupylation. The sequence is that of Prokaryotic ubiquitin-like protein Pup from Rothia mucilaginosa (strain DY-18) (Stomatococcus mucilaginosus).